Consider the following 235-residue polypeptide: Orotidine 5'-phosphate decarboxylase (235 aa).

Substrate is bound by residues Asp-10, Lys-33, 60-69, Thr-123, Arg-185, Gln-194, Gly-214, and Arg-215; that span reads DLKMSDIPNT. The active-site Proton donor is the Lys-62.

It belongs to the OMP decarboxylase family. Type 1 subfamily. As to quaternary structure, homodimer.

It carries out the reaction orotidine 5'-phosphate + H(+) = UMP + CO2. Its pathway is pyrimidine metabolism; UMP biosynthesis via de novo pathway; UMP from orotate: step 2/2. Catalyzes the decarboxylation of orotidine 5'-monophosphate (OMP) to uridine 5'-monophosphate (UMP). This Lactobacillus gasseri (strain ATCC 33323 / DSM 20243 / BCRC 14619 / CIP 102991 / JCM 1131 / KCTC 3163 / NCIMB 11718 / NCTC 13722 / AM63) protein is Orotidine 5'-phosphate decarboxylase.